Consider the following 122-residue polypeptide: E3 ubiquitin-protein ligase PPP1R11 (122 aa).

Polar residues predominate over residues 1–12; the sequence is MAEVPGTSSETI. Positions 1–33 are disordered; that stretch reads MAEVPGTSSETITETVQTGTPPPPQQEGRSLTI. At threonine 20 the chain carries Phosphothreonine. An atypical RING finger domain 1 region spans residues 55-65; the sequence is HLGRRSSKCCC. Positions 72-122 are disordered; that stretch reads QFGESSSESEGDDEEGCGSAHCILGHGRRGHGQREGGGTTVPPSSGGTNPH. The span at 78–87 shows a compositional bias: acidic residues; the sequence is SESEGDDEEG. The segment at 88 to 97 is atypical RING finger domain 2; it reads CGSAHCILGH. The span at 111–122 shows a compositional bias: low complexity; it reads TVPPSSGGTNPH.

The enzyme catalyses S-ubiquitinyl-[E2 ubiquitin-conjugating enzyme]-L-cysteine + [acceptor protein]-L-lysine = [E2 ubiquitin-conjugating enzyme]-L-cysteine + N(6)-ubiquitinyl-[acceptor protein]-L-lysine.. It participates in protein modification; protein ubiquitination. Atypical E3 ubiquitin-protein ligase which ubiquitinates TLR2 at 'Lys-754' leading to its degradation by the proteasome. Inhibitor of protein phosphatase 1. This is E3 ubiquitin-protein ligase PPP1R11 (ppp1r11) from Danio rerio (Zebrafish).